Consider the following 148-residue polypeptide: MSGSVLDEEAEKLMDYDYLLEKLYKKVPPKSGTSEYRIPEPQIIRIGSQTVIRNFREIAQALKRDPKLVARYLQKELATAASYEEESGQLILNVKVSRKVVNQFLQLFMKTYVRCPTCGSIDTKLLRQERAYMLKCEACGAEQPVKPI.

It belongs to the eIF-2-beta/eIF-5 family. Heterotrimer composed of an alpha, a beta and a gamma chain.

Its function is as follows. eIF-2 functions in the early steps of protein synthesis by forming a ternary complex with GTP and initiator tRNA. The chain is Translation initiation factor 2 subunit beta (eif2b) from Aeropyrum pernix (strain ATCC 700893 / DSM 11879 / JCM 9820 / NBRC 100138 / K1).